A 240-amino-acid polypeptide reads, in one-letter code: MSPVANAFDIKSASLDLLALLLRTDNLDELSQALDARFGDTSDAPAEAFVLDVEALPNPTELDLGRLLPLLSRRGIRAVALRHPDNALAAVASRYGLAFANSAAQPRSAQAAAEPAPKAAVESAAAPASAPTMIIDRPVRAGQQIYAKGGDLVVLAMVSAGAEVIADGNIHVYAPLRGRALAGARGNHAARIFARSMEAELVSIAGVYRTIEQALPDSILGKPTQIYLENERLVMTALGE.

It belongs to the MinC family. In terms of assembly, interacts with MinD and FtsZ.

Functionally, cell division inhibitor that blocks the formation of polar Z ring septums. Rapidly oscillates between the poles of the cell to destabilize FtsZ filaments that have formed before they mature into polar Z rings. Prevents FtsZ polymerization. In Chromobacterium violaceum (strain ATCC 12472 / DSM 30191 / JCM 1249 / CCUG 213 / NBRC 12614 / NCIMB 9131 / NCTC 9757 / MK), this protein is Probable septum site-determining protein MinC.